The chain runs to 265 residues: Protein GIR2 (265 aa).

One can recognise an RWD domain in the interval 9 to 159; sequence QELEVLESIY…SSIKERCEQW (151 aa).

It belongs to the RWDD1/GIR2 family. Interacts with GCN1; this interaction prevents the interaction of GCN1 with GCN2 protein kinase and GCN2 activation in amino acid-starved cells. Interacts with RBG1. Associates with ribosomes; the association occurs in a GCN1-dependent manner.

Acts as a negative regulator of the GCN2 kinase activity by disrupting the GCN1-GCN2 interaction in amino acid-starved cells. In Saccharomyces cerevisiae (strain ATCC 204508 / S288c) (Baker's yeast), this protein is Protein GIR2 (GIR2).